Here is a 346-residue protein sequence, read N- to C-terminus: B3 domain-containing protein At5g60142 (346 aa).

A DNA-binding region (TF-B3) is located at residues 13–109 (PKFFKVYLPD…CFNFCIYGRA (97 aa)). Disordered regions lie at residues 158–179 (QDYN…ADND) and 192–243 (TSSE…HDRQ). The span at 192–217 (TSSEDIIVIDDDDDDDDQDYGDDDHA) shows a compositional bias: acidic residues. Residues 218 to 229 (DVEKERWRGVKT) are compositionally biased toward basic and acidic residues.

It is found in the nucleus. This chain is B3 domain-containing protein At5g60142, found in Arabidopsis thaliana (Mouse-ear cress).